The following is a 563-amino-acid chain: Eukaryotic translation initiation factor 3 subunit D-1 (563 aa).

The segment at 98-167 (VQKPPHQRGR…GPPPKMRESS (70 aa)) is disordered. Residues 100-121 (KPPHQRGRFRNMRNSRSGRGRN) are compositionally biased toward basic residues. A Phosphothreonine modification is found at T128. Positions 291–305 (EFDLLTVNETSVEPP) are RNA gate.

It belongs to the eIF-3 subunit D family. In terms of assembly, component of the eukaryotic translation initiation factor 3 (eIF-3) complex. The eIF-3 complex interacts with pix.

It is found in the cytoplasm. Functionally, mRNA cap-binding component of the eukaryotic translation initiation factor 3 (eIF-3) complex, which is involved in protein synthesis of a specialized repertoire of mRNAs and, together with other initiation factors, stimulates binding of mRNA and methionyl-tRNAi to the 40S ribosome. The eIF-3 complex specifically targets and initiates translation of a subset of mRNAs involved in cell proliferation. In the eIF-3 complex, eif3d specifically recognizes and binds the 7-methylguanosine cap of a subset of mRNAs. The chain is Eukaryotic translation initiation factor 3 subunit D-1 from Drosophila mojavensis (Fruit fly).